We begin with the raw amino-acid sequence, 517 residues long: Superoxide-generating NADPH oxidase heavy chain subunit A (517 aa).

Residues 1–19 (MRLPTKEEIQRYWVNEGNK) are Cytoplasmic-facing. The helical transmembrane segment at 20 to 40 (LILVILYTLGNIAAFVYTFVH) threads the bilayer. Residues 41 to 62 (YYNSPAFEVVGYGVCFARGCAQ) are Extracellular-facing. The Ferric oxidoreductase domain maps to 58–201 (RGCAQLLKLN…LFVVFFGLLV (144 aa)). Residues 63 to 83 (LLKLNCALILVPVLRNLLSFL) traverse the membrane as a helical segment. At 84–97 (RGTFLNNYVPFDKN) the chain is on the cytoplasmic side. A helical transmembrane segment spans residues 98 to 118 (IVFHKLIAWVICFATFGHVMA). 2 residues coordinate heme: His-101 and His-115. Residues 119–149 (HFNNFRLYQDITPQEYKRILGIDYPNLTPIK) are Extracellular-facing. The chain crosses the membrane as a helical span at residues 150 to 170 (YAFATLAGWTGHVVCIVMVLM). At 171–184 (YTSAVESIRRPMFE) the chain is on the cytoplasmic side. Residues 185–205 (GFWYTHHLFVVFFGLLVVHGL) form a helical membrane-spanning segment. Positions 190 and 203 each coordinate heme. A topological domain (extracellular) is located at residue His-206. The chain crosses the membrane as a helical span at residues 207–227 (SILEPTSFWKWVIGPCALYIV). The Cytoplasmic portion of the chain corresponds to 228–517 (ERLIRLLRSK…CRFHYNKENF (290 aa)). In terms of domain architecture, FAD-binding FR-type spans 229 to 349 (RLIRLLRSKK…DGPFGAASEE (121 aa)). 283–289 (HPFTITS) serves as a coordination point for FAD.

As to quaternary structure, composed of a heavy chain and a light chain. Requires FAD as cofactor.

The protein localises to the membrane. Critical component of the membrane-bound oxidase that generates superoxide. It is the terminal component of a respiratory chain that transfers single electrons from cytoplasmic NADPH across the plasma membrane to molecular oxygen on the exterior. This Dictyostelium discoideum (Social amoeba) protein is Superoxide-generating NADPH oxidase heavy chain subunit A (noxA).